The primary structure comprises 294 residues: 4-hydroxy-tetrahydrodipicolinate synthase (294 aa).

Threonine 47 contacts pyruvate. The Proton donor/acceptor role is filled by tyrosine 135. The Schiff-base intermediate with substrate role is filled by lysine 163. Position 205 (threonine 205) interacts with pyruvate.

The protein belongs to the DapA family. Homotetramer; dimer of dimers.

The protein localises to the cytoplasm. The enzyme catalyses L-aspartate 4-semialdehyde + pyruvate = (2S,4S)-4-hydroxy-2,3,4,5-tetrahydrodipicolinate + H2O + H(+). Its pathway is amino-acid biosynthesis; L-lysine biosynthesis via DAP pathway; (S)-tetrahydrodipicolinate from L-aspartate: step 3/4. Catalyzes the condensation of (S)-aspartate-beta-semialdehyde [(S)-ASA] and pyruvate to 4-hydroxy-tetrahydrodipicolinate (HTPA). The protein is 4-hydroxy-tetrahydrodipicolinate synthase of Rickettsia africae (strain ESF-5).